The chain runs to 129 residues: Follitropin subunit beta (129 aa).

Residues 1 to 18 (MKSVQFCFLFCCWRATCC) form the signal peptide. Cystine bridges form between cysteine 21-cysteine 69, cysteine 35-cysteine 84, cysteine 38-cysteine 122, cysteine 46-cysteine 100, cysteine 50-cysteine 102, and cysteine 105-cysteine 112. N-linked (GlcNAc...) asparagine glycans are attached at residues asparagine 25 and asparagine 42.

The protein belongs to the glycoprotein hormones subunit beta family. Heterodimer. The active follitropin is a heterodimer composed of an alpha chain/CGA shared with other hormones and a unique beta chain/FSHB shown here.

Its subcellular location is the secreted. In terms of biological role, together with the alpha chain CGA constitutes follitropin, the follicle-stimulating hormone, and provides its biological specificity to the hormone heterodimer. Binds FSHR, a G protein-coupled receptor, on target cells to activate downstream signaling pathways. Follitropin is involved in follicle development and spermatogenesis in reproductive organs. In Cervus nippon (Sika deer), this protein is Follitropin subunit beta (FSHB).